Here is a 529-residue protein sequence, read N- to C-terminus: Bifunctional purine biosynthesis protein PurH (529 aa).

The region spanning 1-148 (MQQRRPVRRA…KNHKDVAIVV (148 aa)) is the MGS-like domain. K287 carries the N6-acetyllysine modification.

Belongs to the PurH family.

The enzyme catalyses (6R)-10-formyltetrahydrofolate + 5-amino-1-(5-phospho-beta-D-ribosyl)imidazole-4-carboxamide = 5-formamido-1-(5-phospho-D-ribosyl)imidazole-4-carboxamide + (6S)-5,6,7,8-tetrahydrofolate. The catalysed reaction is IMP + H2O = 5-formamido-1-(5-phospho-D-ribosyl)imidazole-4-carboxamide. It participates in purine metabolism; IMP biosynthesis via de novo pathway; 5-formamido-1-(5-phospho-D-ribosyl)imidazole-4-carboxamide from 5-amino-1-(5-phospho-D-ribosyl)imidazole-4-carboxamide (10-formyl THF route): step 1/1. Its pathway is purine metabolism; IMP biosynthesis via de novo pathway; IMP from 5-formamido-1-(5-phospho-D-ribosyl)imidazole-4-carboxamide: step 1/1. The polypeptide is Bifunctional purine biosynthesis protein PurH (Escherichia coli O157:H7).